The sequence spans 368 residues: G-protein coupled receptor 183-A (368 aa).

The Extracellular portion of the chain corresponds to M1–Q27. N-linked (GlcNAc...) asparagine glycosylation is found at N7 and N11. Residues Y28–W53 form a helical membrane-spanning segment. The Cytoplasmic portion of the chain corresponds to P54–D73. Residues I74–F91 form a helical membrane-spanning segment. Residues D92–K101 lie on the Extracellular side of the membrane. C100 and C178 are oxidised to a cystine. A helical membrane pass occupies residues A102 to V123. Residues D124–R145 are Cytoplasmic-facing. The chain crosses the membrane as a helical span at residues Y146 to S164. Residues M165 to N189 are Extracellular-facing. The chain crosses the membrane as a helical span at residues L190–C212. Topologically, residues Y213–K238 are cytoplasmic. The chain crosses the membrane as a helical span at residues A239–L262. Topologically, residues Q263–Q282 are extracellular. The chain crosses the membrane as a helical span at residues I283–C307. Residues K308–Q368 lie on the Cytoplasmic side of the membrane.

This sequence belongs to the G-protein coupled receptor 1 family.

Its subcellular location is the cell membrane. G-protein coupled receptor expressed in lymphocytes that acts as a chemotactic receptor for B-cells, T-cells, splenic dendritic cells, monocytes/macrophages and astrocytes. Receptor for oxysterol 7-alpha,25-dihydroxycholesterol (7-alpha,25-OHC) and other related oxysterols. Mediates cell positioning and movement of a number of cells by binding the 7-alpha,25-OHC ligand that forms a chemotactic gradient. Binding of 7-alpha,25-OHC mediates the correct localization of B-cells during humoral immune responses. The sequence is that of G-protein coupled receptor 183-A (gpr183a) from Danio rerio (Zebrafish).